Reading from the N-terminus, the 324-residue chain is Proto-oncogene Mas (324 aa).

The Extracellular portion of the chain corresponds to 1–35; that stretch reads MDQSNMTSFAEEKAMNTSSRNASLGTSHPPIPIVH. Residues Asn5, Asn16, and Asn21 are each glycosylated (N-linked (GlcNAc...) asparagine). The chain crosses the membrane as a helical span at residues 36–60; that stretch reads WVIMSISPLGFVENGILLWFLCFRM. Residues 61 to 64 are Cytoplasmic-facing; sequence RRNP. The chain crosses the membrane as a helical span at residues 65–86; the sequence is FTVYITHLSIADISLLFCIFIL. Over 87–103 the chain is Extracellular; that stretch reads SIDYALDYELSSGHYYT. Residues 104 to 127 traverse the membrane as a helical segment; it reads IVTLSVTFLFGYNTGLYLLTAISV. The Cytoplasmic segment spans residues 128-148; that stretch reads ERCLSVLYPIWYRCHRPKHQS. The chain crosses the membrane as a helical span at residues 149–171; the sequence is AFVCALLWALSCLVTTMEYVMCI. The Extracellular segment spans residues 172 to 184; the sequence is DSGEESHSQSDCR. The helical transmembrane segment at 185–205 threads the bilayer; the sequence is AVIIFIAILSFLVFTPLMLVS. Topologically, residues 206 to 223 are cytoplasmic; it reads STILVVKIRKNTWASHSS. The chain crosses the membrane as a helical span at residues 224–244; that stretch reads KLYIVIMVTIIIFLIFAMPMR. Over 245 to 262 the chain is Extracellular; the sequence is VLYLLYYEYWSTFGNLHN. The chain crosses the membrane as a helical span at residues 263–283; the sequence is ISLLFSTINSSANPFIYFFVG. Residues 284–324 are Cytoplasmic-facing; that stretch reads SSKKKRFRESLKVVLTRAFKDEMQPRRQEGNGNTVSIETVV.

Belongs to the G-protein coupled receptor 1 family. In terms of assembly, interacts with AGTR1. Interacts with FLNA (via filamin repeat 21); increases PKA-mediated phosphorylation of FLNA. Expressed in platelets.

Its subcellular location is the cell membrane. Its function is as follows. Receptor for angiotensin 1-7. Acts specifically as a functional antagonist of AGTR1 (angiotensin-2 type 1 receptor), although it up-regulates AGTR1 receptor levels. Positive regulation of AGTR1 levels occurs through activation of the G-proteins GNA11 and GNAQ, and stimulation of the protein kinase C signaling cascade. The antagonist effect on AGTR1 function is probably due to AGTR1 being physically altered by MAS1. The chain is Proto-oncogene Mas (Mas1) from Rattus norvegicus (Rat).